Consider the following 155-residue polypeptide: Small ribosomal subunit protein uS7cz/uS7cy (155 aa).

The protein belongs to the universal ribosomal protein uS7 family. As to quaternary structure, part of the 30S ribosomal subunit.

The protein resides in the plastid. The protein localises to the chloroplast. Its function is as follows. One of the primary rRNA binding proteins, it binds directly to 16S rRNA where it nucleates assembly of the head domain of the 30S subunit. The sequence is that of Small ribosomal subunit protein uS7cz/uS7cy (rps7-A) from Morus indica (Mulberry).